Here is a 450-residue protein sequence, read N- to C-terminus: Bestrophin homolog 1 (450 aa).

Over 1–31 (MTINYHKEIMTSHPWTFFLLLFKWKGSIWKA) the chain is Cytoplasmic. A helical transmembrane segment spans residues 32-51 (VYMETIIFLICYGIISVIYK). At 52–60 (TAMGESSQR) the chain is on the extracellular side. The helical transmembrane segment at 61–82 (TFESLVRYFDKRLSYIPLEFVL) threads the bilayer. The Cytoplasmic portion of the chain corresponds to 83 to 242 (GFFVTTVVNR…DWVPLPLMYP (160 aa)). A helical membrane pass occupies residues 243–260 (QLVCLAVNLYFLVSIIAR). At 261–278 (QLVIEKHKMVDEVDVYFP) the chain is on the extracellular side. A helical transmembrane segment spans residues 279–292 (VMTFLQFIFYMGWL). The Cytoplasmic portion of the chain corresponds to 293–450 (KVIDVMLNPF…WKIPTNPQKF (158 aa)). Asparagine 300, aspartate 305, and aspartate 308 together coordinate Ca(2+).

The protein belongs to the anion channel-forming bestrophin (TC 1.A.46) family. Calcium-sensitive chloride channel subfamily. In terms of assembly, forms oligomers.

The protein resides in the cell membrane. It carries out the reaction chloride(in) = chloride(out). Ligand-gated anion channel that allows the movement of chloride monoatomic anions across cell membranes when activated by Calcium (Ca2+). The protein is Bestrophin homolog 1 (best-1) of Caenorhabditis elegans.